Consider the following 505-residue polypeptide: Retinoic acid receptor gamma (505 aa).

Disordered stretches follow at residues 1-57 and 113-134; these read MMKF…SSKD and SLSV…PSPP. Basic and acidic residues-rich tracts occupy residues 12-22 and 32-46; these read DGGERPEEEGK and MGKE…KEEA. The segment at 52-142 is modulating; it reads MSSSKDRICS…PPPPPRVYKP (91 aa). Residues 115–124 show a composition bias toward polar residues; it reads SVETQSTSSE. NR C4-type zinc fingers lie at residues 143–163 and 179–203; these read CFVC…CEGC and CHRD…LQKC. The segment at residues 143–208 is a DNA-binding region (nuclear receptor); the sequence is CFVCNDKSSG…RLQKCFEVGM (66 aa). A hinge region spans residues 209 to 237; it reads SKEAVRNDRNKKKKEIKEEVVTDSYEMPP. The 235-residue stretch at 238–472 folds into the NR LBD domain; sequence EMEALIQKVS…PLIREMLENP (235 aa). Residues 462-505 are disordered; it reads PPLIREMLENPEAFEDDASPPPKSEQKPIKVEEKPGEKTSTKDP. Positions 485-505 are enriched in basic and acidic residues; the sequence is SEQKPIKVEEKPGEKTSTKDP.

This sequence belongs to the nuclear hormone receptor family. NR1 subfamily. In terms of assembly, heterodimer; with a RXR molecule. Binds DNA preferentially as a RAR/RXR heterodimer. In terms of tissue distribution, isoform Delta-1A and Isoform Delta-1B are most abundant in regenerating limbs, tails, and the anterior half of the lower jaw. Isoform Delta-2 is broadly and uniformly distributed.

It localises to the nucleus. In terms of biological role, receptor for retinoic acid. Retinoic acid receptors bind as heterodimers to their target response elements in response to their ligands, all-trans or 9-cis retinoic acid, and regulate gene expression in various biological processes. The RAR/RXR heterodimers bind to the retinoic acid response elements (RARE) composed of tandem 5'-AGGTCA-3' sites known as DR1-DR5. The protein is Retinoic acid receptor gamma (RARG) of Notophthalmus viridescens (Eastern newt).